The chain runs to 305 residues: Mitochondrial brown fat uncoupling protein 1 (305 aa).

Over 1–10 (MVGHAATDVP) the chain is Mitochondrial intermembrane. A helical membrane pass occupies residues 11 to 32 (PTMAVKIFSAGVAACVADIITF). Solcar repeat units follow at residues 11–102 (PTMA…VQEF), 109–199 (ASLG…MKEA), and 208–293 (DDVP…LKRE). The Mitochondrial matrix portion of the chain corresponds to 33-73 (PLDTAKVRLQIQGECLTSSAFRYKGVLGTIITLAKTEGPVK). A fatty acid 16:0-binding site is contributed by Lys-56. A helical membrane pass occupies residues 74–96 (LYSGLPAGLQRQISFASLRIGLY). At 97-114 (DTVQEFFTTGKEASLGSK) the chain is on the mitochondrial intermembrane side. A helical transmembrane segment spans residues 115–131 (ISAGLTTGGVAVFIGQP). Over 132–176 (TEVVKVRLQAQSHLHGPKPRYTGTYNAYRIIATTEGLTGLWKGTT) the chain is Mitochondrial matrix. A helical transmembrane segment spans residues 177-193 (PNLTRNVIINCTELVTY). The Mitochondrial intermembrane segment spans residues 194–210 (DLMKEALVKNKLLADDV). A helical transmembrane segment spans residues 211-230 (PCHFVSAVVAGFCTTVLSSP). Residues 231-264 (VDVVKTRFVNSSPGQYTSVPNCAMMMLTREGPSA) lie on the Mitochondrial matrix side of the membrane. Cys-252 carries the post-translational modification Cysteine sulfenic acid (-SOH). A helical transmembrane segment spans residues 265–287 (FFKGFVPSFLRLGSWNIIMFVCF). Lys-267 is a binding site for fatty acid 16:0. The Mitochondrial intermembrane segment spans residues 288 to 305 (EQLKRELMKSRQAMDCAT).

It belongs to the mitochondrial carrier (TC 2.A.29) family. Most probably functions as a monomer. Binds one purine nucleotide per monomer. However, has also been suggested to function as a homodimer or a homotetramer. Tightly associates with cardiolipin in the mitochondrion inner membrane; may stabilize and regulate its activity. May undergo sulfenylation upon cold exposure. May increase the sensitivity of UCP1 thermogenic function to the activation by noradrenaline probably through structural effects. In terms of processing, may undergo ubiquitin-mediated proteasomal degradation.

The protein resides in the mitochondrion inner membrane. The catalysed reaction is H(+)(in) = H(+)(out). Has no constitutive proton transporter activity and has to be activated by long-chain fatty acids/LCFAs. Inhibited by purine nucleotides. Both purine nucleotides and LCFAs bind the cytosolic side of the transporter and directly compete to activate or inhibit it. Activated by noradrenaline and reactive oxygen species. Despite lacking canonical translational encoding for selenocysteine, a small pool of the protein has been observed to selectively incorporate selenocysteine at 'Cys-252'. Selenocysteine-modified protein is highly sensitive to redox modification and may constitute a pool of protein highly sensitive to activation by elevated levels of reactive oxygen species (ROS). Mitochondrial protein responsible for thermogenic respiration, a specialized capacity of brown adipose tissue and beige fat that participates in non-shivering adaptive thermogenesis to temperature and diet variations and more generally to the regulation of energy balance. Functions as a long-chain fatty acid/LCFA and proton symporter, simultaneously transporting one LCFA and one proton through the inner mitochondrial membrane. However, LCFAs remaining associated with the transporter via their hydrophobic tails, it results in an apparent transport of protons activated by LCFAs. Thereby, dissipates the mitochondrial proton gradient and converts the energy of substrate oxydation into heat instead of ATP. Regulates the production of reactive oxygen species/ROS by mitochondria. The protein is Mitochondrial brown fat uncoupling protein 1 of Ovis aries (Sheep).